Reading from the N-terminus, the 223-residue chain is MKRTKSIHHASFRKSWSARHLTPVALAVTAVFMLAGCEKSDETVSLYQNADDCSAANPGKSAECTAAYNNALKEAERTAPKYATREDCVAEFGEGQCQQAPAQAGMAPENQAQAQQSSGSFWMPLMAGYMMGRLMGGGAGFAQQPLFSSKNPASPAYGKYTDAAGKNYGAAQPGRTMTVPKTAMAPKPATTTTVTRGGFGESVAKQSTMQRSAAGTSTRSMGG.

Residues threonine 178–threonine 195 show a composition bias toward low complexity. Residues threonine 178–glycine 223 form a disordered region. The span at alanine 204–glycine 223 shows a compositional bias: polar residues.

Belongs to the UPF0441 family.

The sequence is that of UPF0441 protein YgiB from Salmonella paratyphi A (strain ATCC 9150 / SARB42).